Here is a 259-residue protein sequence, read N- to C-terminus: Acyl-[acyl-carrier-protein]--UDP-N-acetylglucosamine O-acyltransferase (259 aa).

Belongs to the transferase hexapeptide repeat family. LpxA subfamily. Homotrimer.

The protein localises to the cytoplasm. It catalyses the reaction a (3R)-hydroxyacyl-[ACP] + UDP-N-acetyl-alpha-D-glucosamine = a UDP-3-O-[(3R)-3-hydroxyacyl]-N-acetyl-alpha-D-glucosamine + holo-[ACP]. Its pathway is glycolipid biosynthesis; lipid IV(A) biosynthesis; lipid IV(A) from (3R)-3-hydroxytetradecanoyl-[acyl-carrier-protein] and UDP-N-acetyl-alpha-D-glucosamine: step 1/6. Functionally, involved in the biosynthesis of lipid A, a phosphorylated glycolipid that anchors the lipopolysaccharide to the outer membrane of the cell. The protein is Acyl-[acyl-carrier-protein]--UDP-N-acetylglucosamine O-acyltransferase of Nautilia profundicola (strain ATCC BAA-1463 / DSM 18972 / AmH).